Consider the following 59-residue polypeptide: Protein translocase subunit SecE (59 aa).

Residues 35–55 (IVAIGIAIIGVVGFIIVLIGE) form a helical membrane-spanning segment.

This sequence belongs to the SecE/SEC61-gamma family. In terms of assembly, component of the Sec protein translocase complex. Heterotrimer consisting of SecY (alpha), SecG (beta) and SecE (gamma) subunits. The heterotrimers can form oligomers, although 1 heterotrimer is thought to be able to translocate proteins. Interacts with the ribosome. May interact with SecDF, and other proteins may be involved.

It localises to the cell membrane. Essential subunit of the Sec protein translocation channel SecYEG. Clamps together the 2 halves of SecY. May contact the channel plug during translocation. This Methanobrevibacter smithii (strain ATCC 35061 / DSM 861 / OCM 144 / PS) protein is Protein translocase subunit SecE.